An 85-amino-acid chain; its full sequence is MAHKKAGGSTRNGRDSESKRLGVKRFGGESVLAGNIIVRQRGTKFHAGNNVGIGKDHTLFALTEGKVKFEVKGPKNRKFVSIEAE.

The segment at M1–G22 is disordered.

Belongs to the bacterial ribosomal protein bL27 family.

The polypeptide is Large ribosomal subunit protein bL27 (Vibrio parahaemolyticus serotype O3:K6 (strain RIMD 2210633)).